Consider the following 227-residue polypeptide: Gamma-glutamyl-hercynylcysteine sulfoxide hydrolase (227 aa).

Residue cysteine 2 is the Nucleophile of the active site. Residues 2–227 (CRHVAWLGAP…RDAHVVVTPL (226 aa)) form the Glutamine amidotransferase type-2 domain.

The catalysed reaction is gamma-L-glutamyl-hercynylcysteine S-oxide + H2O = S-(hercyn-2-yl)-L-cysteine S-oxide + L-glutamate. It participates in amino-acid biosynthesis; ergothioneine biosynthesis. Functionally, catalyzes the hydrolysis of the gamma-glutamyl amide bond of hercynyl-gamma-L-glutamyl-L-cysteine sulfoxide to produce hercynylcysteine sulfoxide, a step in the biosynthesis pathway of ergothioneine. In Mycolicibacterium smegmatis (strain ATCC 700084 / mc(2)155) (Mycobacterium smegmatis), this protein is Gamma-glutamyl-hercynylcysteine sulfoxide hydrolase.